Consider the following 635-residue polypeptide: Sodium- and chloride-dependent creatine transporter 1 (635 aa).

Residues 1–35 form a disordered region; sequence MAKKSAENGIYSVSGDEKKGPLIAPGPDGAPAKGD. The Cytoplasmic portion of the chain corresponds to 1–60; sequence MAKKSAENGIYSVSGDEKKGPLIAPGPDGAPAKGDGPAGLGAPGGCLAVPPRETWTRQMD. Low complexity predominate over residues 25-35; sequence PGPDGAPAKGD. The chain crosses the membrane as a helical span at residues 61–81; it reads FIMSCVGFAVGLGNVWRFPYL. Residues 82-87 lie on the Extracellular side of the membrane; the sequence is CYKNGG. Residues 88-108 traverse the membrane as a helical segment; the sequence is GVFLIPYVLIALVGGIPIFFL. At 109–138 the chain is on the cytoplasmic side; sequence EISLGQFMKAGSINVWNICPLFKGLGYASM. A helical transmembrane segment spans residues 139-159; that stretch reads VIVFYCNTYYIMVLAWGFYYL. The Extracellular segment spans residues 160–230; that stretch reads VKSFTTTLPW…LSGGLEVPGA (71 aa). Residues Asn192 and Asn197 are each glycosylated (N-linked (GlcNAc...) asparagine). A helical transmembrane segment spans residues 231-251; that stretch reads LNSEVTLCLLACWVLVYFCVW. Residues 252–269 are Cytoplasmic-facing; that stretch reads KGVKSTGKIVYFTATFPY. The chain crosses the membrane as a helical span at residues 270-290; sequence VVLVVLLVRGVLLPGALDGII. The Extracellular segment spans residues 291 to 304; the sequence is YYLKPDWSKLRSPQ. A helical membrane pass occupies residues 305-325; it reads VWIDAGTQIFFSYAIGLGALT. At 326-341 the chain is on the cytoplasmic side; that stretch reads ALGSYNRFNNNCYKDA. A helical transmembrane segment spans residues 342 to 362; that stretch reads IILALINSGTSFFAGFVVFSI. The Extracellular portion of the chain corresponds to 363 to 394; sequence LGFMATEQGVHISKVAESGPGLAFIAYPRAVT. Residues 395–415 form a helical membrane-spanning segment; sequence LMPVAPLWAALFFFMLLLLGL. The Cytoplasmic segment spans residues 416–444; it reads DSQFVGVEGFITGLLDLLPASYYFRFQRE. A helical membrane pass occupies residues 445-465; it reads ISVALCCALCFVIDLSMVQMA. Residues 466–479 are Extracellular-facing; that stretch reads GMYVFQLFDYYSAS. Residues 480-500 form a helical membrane-spanning segment; that stretch reads GTTLLWQAFWECVAVAWVYGA. The Cytoplasmic portion of the chain corresponds to 501–520; sequence DRFMDDIACMIGYRPCPWMK. The helical transmembrane segment at 521 to 541 threads the bilayer; that stretch reads WCWSFFTPLVCMGIFIFNIVY. Over 542–560 the chain is Extracellular; the sequence is YKPLVYNKTYVYPWWGEAM. Residue Asn548 is glycosylated (N-linked (GlcNAc...) asparagine). The helical transmembrane segment at 561-581 threads the bilayer; the sequence is GWAFALSSMLCVPLHLLGCLL. Residues 582-635 lie on the Cytoplasmic side of the membrane; the sequence is RAKGTMAERWQHLTQPVWGLHHLEYRAQDADVRGLTTLTPVSESSKVVVVESVM. A phosphothreonine mark is found at Thr617 and Thr620. Ser623 is modified (phosphoserine).

Belongs to the sodium:neurotransmitter symporter (SNF) (TC 2.A.22) family. SLC6A8 subfamily. Glycosylated. In terms of tissue distribution, prominent in kidney, heart, and muscle, also present in brain, but not in liver and intestine.

The protein localises to the cell membrane. It is found in the apical cell membrane. It catalyses the reaction creatine(out) + chloride(out) + 2 Na(+)(out) = creatine(in) + chloride(in) + 2 Na(+)(in). Creatine:sodium symporter which mediates the uptake of creatine. Plays an important role in supplying creatine to the brain via the blood-brain barrier. This Oryctolagus cuniculus (Rabbit) protein is Sodium- and chloride-dependent creatine transporter 1 (SLC6A8).